The following is a 500-amino-acid chain: NAD(P)H-quinone oxidoreductase chain 4, chloroplastic (500 aa).

15 helical membrane passes run 3-23, 37-57, 87-107, 113-130, 134-154, 167-187, 208-228, 242-262, 272-292, 305-325, 330-350, 364-384, 386-406, 411-431, and 462-482; these read FFPW…IILF, ICIC…HFQL, IGPI…AWPV, LFHF…GLFA, LLLF…LLSM, FILY…GVGL, ALEI…SPII, HYST…YGLI, AHSI…IYAA, IAYS…SIND, GAIL…FLAG, MGGI…FSMA, LALP…GIIT, LLIS…LTPI, and LFVS…PDFV.

It belongs to the complex I subunit 4 family.

Its subcellular location is the plastid. It is found in the chloroplast thylakoid membrane. The catalysed reaction is a plastoquinone + NADH + (n+1) H(+)(in) = a plastoquinol + NAD(+) + n H(+)(out). The enzyme catalyses a plastoquinone + NADPH + (n+1) H(+)(in) = a plastoquinol + NADP(+) + n H(+)(out). This chain is NAD(P)H-quinone oxidoreductase chain 4, chloroplastic, found in Daucus carota (Wild carrot).